A 580-amino-acid chain; its full sequence is MFS-type transporter thnB (580 aa).

A disordered region spans residues 1 to 33 (MSGDYSATRKSENVDTSTTASQEDSSLAPEQPE). Polar residues predominate over residues 14-25 (VDTSTTASQEDS). The next 7 helical transmembrane spans lie at 60-80 (LITL…DQTI), 92-112 (FHGL…LGGF), 125-145 (LKIS…ICGV), 157-177 (AIAG…LAFS), 188-208 (STMG…GGAF), 216-236 (WCFY…FLFF), and 259-279 (VGTV…QYAG). N-linked (GlcNAc...) asparagine glycosylation is present at asparagine 285. 7 consecutive transmembrane segments (helical) span residues 286–306 (SSVV…LAAW), 331–351 (IFQF…PIYF), 364–384 (VDNL…GAAV), 389–409 (MATP…GLLY), 421–441 (IGYQ…ALNI), 457–477 (SLYF…QAAF), and 529–549 (FAVS…MVMI).

Belongs to the major facilitator superfamily.

It is found in the membrane. Functionally, MFS-type transporter; part of the gene cluster that produces the tetronate natural products trihazones. This Trichoderma harzianum (Hypocrea lixii) protein is MFS-type transporter thnB.